A 278-amino-acid polypeptide reads, in one-letter code: 4-hydroxy-tetrahydrodipicolinate reductase (278 aa).

NAD(+)-binding positions include 13-18 (GAAGKM) and 111-113 (GTT). H167 acts as the Proton donor/acceptor in catalysis. H168 lines the (S)-2,3,4,5-tetrahydrodipicolinate pocket. Residue K171 is the Proton donor of the active site. Residue 177-178 (GT) coordinates (S)-2,3,4,5-tetrahydrodipicolinate.

It belongs to the DapB family.

Its subcellular location is the cytoplasm. It carries out the reaction (S)-2,3,4,5-tetrahydrodipicolinate + NAD(+) + H2O = (2S,4S)-4-hydroxy-2,3,4,5-tetrahydrodipicolinate + NADH + H(+). It catalyses the reaction (S)-2,3,4,5-tetrahydrodipicolinate + NADP(+) + H2O = (2S,4S)-4-hydroxy-2,3,4,5-tetrahydrodipicolinate + NADPH + H(+). It functions in the pathway amino-acid biosynthesis; L-lysine biosynthesis via DAP pathway; (S)-tetrahydrodipicolinate from L-aspartate: step 4/4. In terms of biological role, catalyzes the conversion of 4-hydroxy-tetrahydrodipicolinate (HTPA) to tetrahydrodipicolinate. In Trichormus variabilis (strain ATCC 29413 / PCC 7937) (Anabaena variabilis), this protein is 4-hydroxy-tetrahydrodipicolinate reductase.